We begin with the raw amino-acid sequence, 608 residues long: Alpha-1,3-galactosidase A (608 aa).

An N-terminal signal peptide occupies residues 1–21 (MQRRTFIKSISAMMATSTTLG). Cys22 carries the N-palmitoyl cysteine lipid modification. A lipid anchor (S-diacylglycerol cysteine) is attached at Cys22. PbH1 repeat units follow at residues 262 to 292 (TKNT…KLDN), 318 to 340 (KGHV…NVHG), 426 to 448 (PDHV…LLTV), 449 to 470 (SGKI…KIGS), and 481 to 507 (VESV…DIVP).

It belongs to the glycosyl hydrolase 110 family. A subfamily.

The protein resides in the cell membrane. It carries out the reaction Hydrolysis of terminal, non-reducing branched (1-&gt;3)-alpha-D-galactosidic residues, producing free D-galactose.. The enzyme catalyses Hydrolysis of terminal, non-reducing alpha-D-galactose residues in alpha-D-galactosides, including galactose oligosaccharides, galactomannans and galactolipids.. In terms of biological role, alpha-galactosidase that specifically removes branched alpha-1,3-linked galactose residues present in blood group B antigens. Has no activity toward linear alpha-1,3-linked galactose residues. The protein is Alpha-1,3-galactosidase A (glaA) of Shewanella woodyi (strain ATCC 51908 / MS32).